The sequence spans 260 residues: Dolichol-phosphate mannosyltransferase subunit 1 (260 aa).

Ala-2 carries the N-acetylalanine modification. Phosphoserine is present on residues Ser-3 and Ser-9. GDP-alpha-D-mannose is bound by residues Pro-32, Tyr-34, Glu-36, Ile-63, Asp-65, Asp-118, Ala-119, Asp-120, Arg-147, Arg-234, and Lys-240. Asp-120 serves as a coordination point for Mg(2+). Asp-120 contacts Mn(2+).

The protein belongs to the glycosyltransferase 2 family. In terms of assembly, component of the dolichol-phosphate mannose (DPM) synthase complex composed of DPM1, DPM2 and DPM3; within the complex, directly interacts with DPM3. This interaction stabilizes DPM1. The cofactor is Mg(2+). Mn(2+) serves as cofactor. It depends on Ca(2+) as a cofactor.

It localises to the endoplasmic reticulum. It carries out the reaction a di-trans,poly-cis-dolichyl phosphate + GDP-alpha-D-mannose = a di-trans,poly-cis-dolichyl beta-D-mannosyl phosphate + GDP. The protein operates within protein modification; protein glycosylation. Transfers mannose from GDP-mannose to dolichol monophosphate to form dolichol phosphate mannose (Dol-P-Man) which is the mannosyl donor in pathways leading to N-glycosylation, glycosyl phosphatidylinositol membrane anchoring, and O-mannosylation of proteins; catalytic subunit of the dolichol-phosphate mannose (DPM) synthase complex. The protein is Dolichol-phosphate mannosyltransferase subunit 1 (DPM1) of Homo sapiens (Human).